A 328-amino-acid polypeptide reads, in one-letter code: Phosphate acetyltransferase (328 aa).

It belongs to the phosphate acetyltransferase and butyryltransferase family.

It localises to the cytoplasm. The catalysed reaction is acetyl-CoA + phosphate = acetyl phosphate + CoA. It participates in metabolic intermediate biosynthesis; acetyl-CoA biosynthesis; acetyl-CoA from acetate: step 2/2. The protein is Phosphate acetyltransferase (pta) of Staphylococcus aureus (strain MSSA476).